Consider the following 116-residue polypeptide: Large ribosomal subunit protein bL19 (116 aa).

It belongs to the bacterial ribosomal protein bL19 family.

Functionally, this protein is located at the 30S-50S ribosomal subunit interface and may play a role in the structure and function of the aminoacyl-tRNA binding site. In Pseudomonas fluorescens (strain ATCC BAA-477 / NRRL B-23932 / Pf-5), this protein is Large ribosomal subunit protein bL19.